The chain runs to 550 residues: Chaperonin GroEL (550 aa).

ATP is bound by residues 30 to 33 (TLGP), lysine 51, 87 to 91 (DGTTT), glycine 415, 479 to 481 (NAA), and aspartate 495.

This sequence belongs to the chaperonin (HSP60) family. Forms a cylinder of 14 subunits composed of two heptameric rings stacked back-to-back. Interacts with the co-chaperonin GroES.

It localises to the cytoplasm. The enzyme catalyses ATP + H2O + a folded polypeptide = ADP + phosphate + an unfolded polypeptide.. Its function is as follows. Together with its co-chaperonin GroES, plays an essential role in assisting protein folding. The GroEL-GroES system forms a nano-cage that allows encapsulation of the non-native substrate proteins and provides a physical environment optimized to promote and accelerate protein folding. This is Chaperonin GroEL from Polynucleobacter asymbioticus (strain DSM 18221 / CIP 109841 / QLW-P1DMWA-1) (Polynucleobacter necessarius subsp. asymbioticus).